A 115-amino-acid chain; its full sequence is NAD(P)H-quinone oxidoreductase subunit M (115 aa).

This sequence belongs to the complex I NdhM subunit family. NDH-1 can be composed of about 15 different subunits; different subcomplexes with different compositions have been identified which probably have different functions.

It is found in the cellular thylakoid membrane. The enzyme catalyses a plastoquinone + NADH + (n+1) H(+)(in) = a plastoquinol + NAD(+) + n H(+)(out). The catalysed reaction is a plastoquinone + NADPH + (n+1) H(+)(in) = a plastoquinol + NADP(+) + n H(+)(out). Functionally, NDH-1 shuttles electrons from an unknown electron donor, via FMN and iron-sulfur (Fe-S) centers, to quinones in the respiratory and/or the photosynthetic chain. The immediate electron acceptor for the enzyme in this species is believed to be plastoquinone. Couples the redox reaction to proton translocation, and thus conserves the redox energy in a proton gradient. Cyanobacterial NDH-1 also plays a role in inorganic carbon-concentration. The protein is NAD(P)H-quinone oxidoreductase subunit M of Prochlorococcus marinus (strain MIT 9215).